The chain runs to 494 residues: Neuronal acetylcholine receptor subunit alpha-6 (494 aa).

Residues 1 to 25 (MLTSKGQGFLHGGLCLWLCVFTPFF) form the signal peptide. Topologically, residues 26 to 239 (KGCVGCATEE…ITYSFYIRRL (214 aa)) are extracellular. Residues Asn-54 and Asn-171 are each glycosylated (N-linked (GlcNAc...) asparagine). Cystine bridges form between Cys-158/Cys-172 and Cys-222/Cys-223. 3 helical membrane-spanning segments follow: residues 240–264 (PMFY…VFYL), 272–290 (VTLC…LVIT), and 306–327 (YLLF…VLNI). The Cytoplasmic segment spans residues 328-465 (HYRTPTTHTM…WKYVAMVVDR (138 aa)). Ser-401 is modified (phosphoserine). Residues 466–484 (VFLWVFIIVCVFGTAGLFL) traverse the membrane as a helical segment.

This sequence belongs to the ligand-gated ion channel (TC 1.A.9) family. Acetylcholine receptor (TC 1.A.9.1) subfamily. Alpha-6/CHRNA6 sub-subfamily. In terms of assembly, neuronal AChR is composed of two different types of subunits: alpha and non-alpha (beta). CHRNA6/alpha-6 subunit can be combined to CHRNB2/beta-2, CHRNA4/alpha-4 and CHRNB3/beta-3 to give rise to functional receptors. Heteropentamers containing CHRNB3 have an stoichiometry of (CHRNA6:CHRNB2)2:CHRNB3. Interacts with LYPD6.

It is found in the synaptic cell membrane. The catalysed reaction is Ca(2+)(in) = Ca(2+)(out). The enzyme catalyses K(+)(in) = K(+)(out). It carries out the reaction Na(+)(in) = Na(+)(out). Its activity is regulated as follows. Activated by a myriad of ligands such as acetylcholine, cytisine and nicotine. CHRNA6 nAChR activity is inhibited by the antagonists alpha-conotoxin MII and PIA, a small disulfide-constrained peptides from cone snails. Its function is as follows. Component of neuronal acetylcholine receptors (nAChRs) that function as pentameric, ligand-gated cation channels with high calcium permeability among other activities. nAChRs are excitatory neurotrasnmitter receptors formed by a collection of nAChR subunits known to mediate synaptic transmission in the nervous system and the neuromuscular junction. Each nAchR subunit confers differential attributes to channel properties, including activation, deactivation and desensitization kinetics, pH sensitivity, cation permeability, and binding to allosteric modulators. CHRNA6 forms pentameric channels with CHRNB2, CHRNB3 and CHRNA4 that exhibit high sensitivity to ACh and nicotine and are predominantly expressed in only a few brain areas, including dopaminergic neurons, norepirephrine neurons and cells of the visual system. nAChrs containing CHRNA6 subunits mediate endogenous cholinergic modulation of dopamine and gamma-aminobutyric acid (GABA) release in response to nicotine at nerve terminals. The polypeptide is Neuronal acetylcholine receptor subunit alpha-6 (Homo sapiens (Human)).